We begin with the raw amino-acid sequence, 436 residues long: Elongation factor 1-alpha (436 aa).

A tr-type G domain is found at 8 to 232 (KPHLNMIVTG…DDFKMAEKPV (225 aa)). The G1 stretch occupies residues 17–24 (GHIDNGKS). Position 17 to 24 (17 to 24 (GHIDNGKS)) interacts with GTP. Residue S24 participates in Mg(2+) binding. The interval 74–78 (GITID) is G2. The tract at residues 95-98 (DAPG) is G3. GTP contacts are provided by residues 95–99 (DAPGH) and 157–160 (NKMD). Residues 157–160 (NKMD) form a G4 region. The G5 stretch occupies residues 196-198 (SGW).

It belongs to the TRAFAC class translation factor GTPase superfamily. Classic translation factor GTPase family. EF-Tu/EF-1A subfamily.

Its subcellular location is the cytoplasm. It carries out the reaction GTP + H2O = GDP + phosphate + H(+). Functionally, GTP hydrolase that promotes the GTP-dependent binding of aminoacyl-tRNA to the A-site of ribosomes during protein biosynthesis. The chain is Elongation factor 1-alpha from Cenarchaeum symbiosum (strain A).